The following is a 206-amino-acid chain: Somatotropin (206 aa).

The first 22 residues, 1 to 22 (MAGLHFFPALLALLMASLQTHQ), serve as a signal peptide directing secretion. 2 cysteine pairs are disulfide-bonded: Cys75/Cys179 and Cys196/Cys204.

It belongs to the somatotropin/prolactin family.

The protein localises to the secreted. Functionally, growth hormone plays an important role in growth control and is involved in the regulation of several anabolic processes. Implicated as an osmoregulatory substance important for seawater adaptation. The chain is Somatotropin (gh) from Protopterus annectens (African lungfish).